Here is a 47-residue protein sequence, read N- to C-terminus: Glyceraldehyde-3-phosphate dehydrogenase, cytosolic (47 aa).

The protein belongs to the glyceraldehyde-3-phosphate dehydrogenase family. Homotetramer.

The protein localises to the cytoplasm. It catalyses the reaction D-glyceraldehyde 3-phosphate + phosphate + NAD(+) = (2R)-3-phospho-glyceroyl phosphate + NADH + H(+). It participates in carbohydrate degradation; glycolysis; pyruvate from D-glyceraldehyde 3-phosphate: step 1/5. This is Glyceraldehyde-3-phosphate dehydrogenase, cytosolic from Pseudotsuga menziesii (Douglas-fir).